The chain runs to 362 residues: Peptide chain release factor 1 (362 aa).

Residue glutamine 237 is modified to N5-methylglutamine.

The protein belongs to the prokaryotic/mitochondrial release factor family. In terms of processing, methylated by PrmC. Methylation increases the termination efficiency of RF1.

It is found in the cytoplasm. Peptide chain release factor 1 directs the termination of translation in response to the peptide chain termination codons UAG and UAA. This is Peptide chain release factor 1 from Aliivibrio salmonicida (strain LFI1238) (Vibrio salmonicida (strain LFI1238)).